The primary structure comprises 148 residues: ATP synthase epsilon chain (148 aa).

It belongs to the ATPase epsilon chain family. In terms of assembly, F-type ATPases have 2 components, CF(1) - the catalytic core - and CF(0) - the membrane proton channel. CF(1) has five subunits: alpha(3), beta(3), gamma(1), delta(1), epsilon(1). CF(0) has three main subunits: a, b and c.

The protein localises to the cell membrane. Produces ATP from ADP in the presence of a proton gradient across the membrane. This chain is ATP synthase epsilon chain, found in Streptococcus thermophilus (strain ATCC BAA-491 / LMD-9).